The following is a 327-amino-acid chain: Phenylalanine--tRNA ligase alpha subunit (327 aa).

Glu252 provides a ligand contact to Mg(2+).

The protein belongs to the class-II aminoacyl-tRNA synthetase family. Phe-tRNA synthetase alpha subunit type 1 subfamily. In terms of assembly, tetramer of two alpha and two beta subunits. Mg(2+) is required as a cofactor.

It localises to the cytoplasm. The enzyme catalyses tRNA(Phe) + L-phenylalanine + ATP = L-phenylalanyl-tRNA(Phe) + AMP + diphosphate + H(+). This is Phenylalanine--tRNA ligase alpha subunit from Vibrio parahaemolyticus serotype O3:K6 (strain RIMD 2210633).